The chain runs to 377 residues: Protein-tyrosine sulfotransferase 2 (377 aa).

Topologically, residues 1–8 (MRLSVRRV) are cytoplasmic. The chain crosses the membrane as a helical; Signal-anchor for type II membrane protein span at residues 9 to 25 (LLAAGCALVLVLAVQLG). The Lumenal portion of the chain corresponds to 26–377 (QQVLECRAVL…NSTSSHLGSS (352 aa)). 3'-phosphoadenylyl sulfate is bound at residue 78-82 (RSGTT). A disulfide bond links C96 and C156. E99 (proton donor/acceptor) is an active-site residue. Positions 101-105 (RIIPR) are interaction with peptide substrate. 3'-phosphoadenylyl sulfate-binding residues include R183, S191, and R195. An intrachain disulfide couples C225 to C233. 3'-phosphoadenylyl sulfate is bound by residues Y238, 285-294 (STDQVIKPVN), and K300. N-linked (GlcNAc...) asparagine glycosylation is found at N343 and N368.

Belongs to the protein sulfotransferase family. In terms of assembly, homodimer. Can also form heterodimers with TPST1. In terms of processing, N-glycosylated. As to expression, widely expressed.

It is found in the golgi apparatus membrane. The catalysed reaction is L-tyrosyl-[protein] + 3'-phosphoadenylyl sulfate = O-sulfo-L-tyrosine-[protein] + adenosine 3',5'-bisphosphate + H(+). Its function is as follows. Catalyzes the O-sulfation of tyrosine residues within acidic motifs of polypeptides, using 3'-phosphoadenylyl sulfate (PAPS) as cosubstrate. This Homo sapiens (Human) protein is Protein-tyrosine sulfotransferase 2 (TPST2).